Reading from the N-terminus, the 299-residue chain is tRNA dimethylallyltransferase (299 aa).

11–18 lines the ATP pocket; that stretch reads GPTAVGKT. Position 13–18 (13–18) interacts with substrate; that stretch reads TAVGKT. Positions 36–39 are interaction with substrate tRNA; the sequence is DSQQ.

This sequence belongs to the IPP transferase family. In terms of assembly, monomer. It depends on Mg(2+) as a cofactor.

It carries out the reaction adenosine(37) in tRNA + dimethylallyl diphosphate = N(6)-dimethylallyladenosine(37) in tRNA + diphosphate. Catalyzes the transfer of a dimethylallyl group onto the adenine at position 37 in tRNAs that read codons beginning with uridine, leading to the formation of N6-(dimethylallyl)adenosine (i(6)A). This chain is tRNA dimethylallyltransferase, found in Streptococcus pyogenes serotype M12 (strain MGAS2096).